We begin with the raw amino-acid sequence, 75 residues long: DNA-directed RNA polymerase subunit omega (75 aa).

This sequence belongs to the RNA polymerase subunit omega family. In cyanobacteria the RNAP catalytic core is composed of 2 alpha, 1 beta, 1 beta', 1 gamma and 1 omega subunit. When a sigma factor is associated with the core the holoenzyme is formed, which can initiate transcription.

The enzyme catalyses RNA(n) + a ribonucleoside 5'-triphosphate = RNA(n+1) + diphosphate. Its function is as follows. Promotes RNA polymerase assembly. Latches the N- and C-terminal regions of the beta' subunit thereby facilitating its interaction with the beta and alpha subunits. This chain is DNA-directed RNA polymerase subunit omega, found in Cyanothece sp. (strain PCC 7425 / ATCC 29141).